A 70-amino-acid polypeptide reads, in one-letter code: Probable protein transport protein Sec61 subunit gamma (70 aa).

The Cytoplasmic portion of the chain corresponds to 1 to 39 (MADQIQEILDVPREFLKDGIQFIKKCQKPDRREFIKISQ). A helical membrane pass occupies residues 40 to 58 (AVGTGFLIMGAVGYLVKLI). Residues 59-70 (HIPLNQVLVGGA) lie on the Extracellular side of the membrane.

This sequence belongs to the SecE/SEC61-gamma family. In terms of assembly, heterotrimeric complex composed of SEC61-alpha, SEC61-beta and SEC61-gamma.

It localises to the endoplasmic reticulum membrane. In terms of biological role, necessary for protein translocation in the endoplasmic reticulum. In Neurospora crassa (strain ATCC 24698 / 74-OR23-1A / CBS 708.71 / DSM 1257 / FGSC 987), this protein is Probable protein transport protein Sec61 subunit gamma.